An 88-amino-acid chain; its full sequence is Apolipoprotein C-I (88 aa).

The N-terminal stretch at 1-26 (MRLFLSLPVWVAVLAMVLEGPAPAQA) is a signal peptide.

It belongs to the apolipoprotein C1 family.

The protein localises to the secreted. Inhibitor of lipoprotein binding to the low density lipoprotein (LDL) receptor, LDL receptor-related protein, and very low density lipoprotein (VLDL) receptor. Associates with high density lipoproteins (HDL) and the triacylglycerol-rich lipoproteins in the plasma and makes up about 10% of the protein of the VLDL and 2% of that of HDL. Appears to interfere directly with fatty acid uptake and is also the major plasma inhibitor of cholesteryl ester transfer protein (CETP). Binds free fatty acids and reduces their intracellular esterification. Modulates the interaction of APOE with beta-migrating VLDL and inhibits binding of beta-VLDL to the LDL receptor-related protein. The protein is Apolipoprotein C-I (APOC1) of Ursus maritimus (Polar bear).